A 78-amino-acid chain; its full sequence is Leukemia-associated protein 1 (78 aa).

Functionally, may act as a tumor suppressor. This is Leukemia-associated protein 1 (DLEU1) from Homo sapiens (Human).